The primary structure comprises 199 residues: Transgelin-2 (199 aa).

An N-acetylalanine modification is found at alanine 2. Serine 11 is modified (phosphoserine). 2 positions are modified to N6-acetyllysine: lysine 17 and lysine 20. Residues alanine 24–alanine 136 form the Calponin-homology (CH) domain. At serine 163 the chain carries Phosphoserine. Lysine 171 participates in a covalent cross-link: Glycyl lysine isopeptide (Lys-Gly) (interchain with G-Cter in SUMO2). The stretch at isoleucine 174–leucine 199 is one Calponin-like repeat. Position 180 is a phosphothreonine (threonine 180). 2 positions are modified to omega-N-methylarginine: arginine 182 and arginine 196.

This sequence belongs to the calponin family. As to expression, expressed in epididymis (at protein level).

The polypeptide is Transgelin-2 (TAGLN2) (Homo sapiens (Human)).